Consider the following 88-residue polypeptide: Sec-independent protein translocase protein TatA (88 aa).

Residues 1–21 (MNLGPTEILLILVIVVLLFGA) form a helical membrane-spanning segment. Residues 46 to 56 (SNDDQRYEEQQ) show a composition bias toward basic and acidic residues. The tract at residues 46–88 (SNDDQRYEEQQQQRQIAAQAQQQVVNPVEIPQPQPTDIQRPQQ) is disordered. The segment covering 57–68 (QQRQIAAQAQQQ) has biased composition (low complexity).

This sequence belongs to the TatA/E family. As to quaternary structure, the Tat system comprises two distinct complexes: a TatABC complex, containing multiple copies of TatA, TatB and TatC subunits, and a separate TatA complex, containing only TatA subunits. Substrates initially bind to the TatABC complex, which probably triggers association of the separate TatA complex to form the active translocon.

The protein localises to the cell membrane. Its function is as follows. Part of the twin-arginine translocation (Tat) system that transports large folded proteins containing a characteristic twin-arginine motif in their signal peptide across membranes. TatA could form the protein-conducting channel of the Tat system. This chain is Sec-independent protein translocase protein TatA, found in Corynebacterium diphtheriae (strain ATCC 700971 / NCTC 13129 / Biotype gravis).